Consider the following 167-residue polypeptide: Lipoprotein signal peptidase (167 aa).

The next 3 membrane-spanning stretches (helical) occupy residues 10–30 (LIWLLLSIAIIALDQATKAWV), 68–88 (WQMWLFIALALGISGLLTFWL), and 98–118 (SALPYALIIGGGIGNVIDRFL). Residues D124 and D142 contribute to the active site. Residues 138–158 (FNLADSAIVAGAIGIGLLSLF) traverse the membrane as a helical segment.

It belongs to the peptidase A8 family.

It localises to the cell inner membrane. The catalysed reaction is Release of signal peptides from bacterial membrane prolipoproteins. Hydrolyzes -Xaa-Yaa-Zaa-|-(S,diacylglyceryl)Cys-, in which Xaa is hydrophobic (preferably Leu), and Yaa (Ala or Ser) and Zaa (Gly or Ala) have small, neutral side chains.. It functions in the pathway protein modification; lipoprotein biosynthesis (signal peptide cleavage). In terms of biological role, this protein specifically catalyzes the removal of signal peptides from prolipoproteins. The chain is Lipoprotein signal peptidase from Xylella fastidiosa (strain 9a5c).